The chain runs to 165 residues: SsrA-binding protein (165 aa).

The disordered stretch occupies residues 141–165 (KLHDKRENEKRKQSEREVKSALARY). Residues 144–159 (DKRENEKRKQSEREVK) show a composition bias toward basic and acidic residues.

It belongs to the SmpB family.

It is found in the cytoplasm. Functionally, required for rescue of stalled ribosomes mediated by trans-translation. Binds to transfer-messenger RNA (tmRNA), required for stable association of tmRNA with ribosomes. tmRNA and SmpB together mimic tRNA shape, replacing the anticodon stem-loop with SmpB. tmRNA is encoded by the ssrA gene; the 2 termini fold to resemble tRNA(Ala) and it encodes a 'tag peptide', a short internal open reading frame. During trans-translation Ala-aminoacylated tmRNA acts like a tRNA, entering the A-site of stalled ribosomes, displacing the stalled mRNA. The ribosome then switches to translate the ORF on the tmRNA; the nascent peptide is terminated with the 'tag peptide' encoded by the tmRNA and targeted for degradation. The ribosome is freed to recommence translation, which seems to be the essential function of trans-translation. The chain is SsrA-binding protein from Prochlorococcus marinus (strain SARG / CCMP1375 / SS120).